We begin with the raw amino-acid sequence, 335 residues long: Glyceraldehyde-3-phosphate dehydrogenase (335 aa).

NAD(+)-binding positions include 12–13, Asp34, and Arg79; that span reads RI. D-glyceraldehyde 3-phosphate is bound by residues 150–152, Thr181, 210–211, and Arg233; these read SCT and TG. Catalysis depends on Cys151, which acts as the Nucleophile. Asn315 is an NAD(+) binding site.

The protein belongs to the glyceraldehyde-3-phosphate dehydrogenase family. Homotetramer.

The protein resides in the cytoplasm. The catalysed reaction is D-glyceraldehyde 3-phosphate + phosphate + NAD(+) = (2R)-3-phospho-glyceroyl phosphate + NADH + H(+). Its pathway is carbohydrate degradation; glycolysis; pyruvate from D-glyceraldehyde 3-phosphate: step 1/5. The chain is Glyceraldehyde-3-phosphate dehydrogenase (GPD) from Ogataea parapolymorpha (strain ATCC 26012 / BCRC 20466 / JCM 22074 / NRRL Y-7560 / DL-1) (Yeast).